The chain runs to 147 residues: UPF0178 protein VP2328 (147 aa).

Belongs to the UPF0178 family.

In Vibrio parahaemolyticus serotype O3:K6 (strain RIMD 2210633), this protein is UPF0178 protein VP2328.